Consider the following 88-residue polypeptide: ATP synthase F(0) complex subunit f, mitochondrial (88 aa).

N-acetylalanine is present on Ala-2. Ser-3 is modified (phosphoserine). Residue Lys-16 is modified to N6-acetyllysine. The chain crosses the membrane as a helical span at residues 62–79 (MVLAAYVVFSYCISYKEL).

The protein belongs to the ATPase F chain family. In terms of assembly, component of the ATP synthase complex composed at least of ATP5F1A/subunit alpha, ATP5F1B/subunit beta, ATP5MC1/subunit c (homooctomer), MT-ATP6/subunit a, MT-ATP8/subunit 8, ATP5ME/subunit e, ATP5MF/subunit f, ATP5MG/subunit g, ATP5MK/subunit k, ATP5MJ/subunit j, ATP5F1C/subunit gamma, ATP5F1D/subunit delta, ATP5F1E/subunit epsilon, ATP5PF/subunit F6, ATP5PB/subunit b, ATP5PD/subunit d, ATP5PO/subunit OSCP. ATP synthase complex consists of a soluble F(1) head domain (subunits alpha(3) and beta(3)) - the catalytic core - and a membrane F(0) domain - the membrane proton channel (subunits c, a, 8, e, f, g, k and j). These two domains are linked by a central stalk (subunits gamma, delta, and epsilon) rotating inside the F1 region and a stationary peripheral stalk (subunits F6, b, d, and OSCP).

Its subcellular location is the mitochondrion. It is found in the mitochondrion inner membrane. Subunit f, of the mitochondrial membrane ATP synthase complex (F(1)F(0) ATP synthase or Complex V) that produces ATP from ADP in the presence of a proton gradient across the membrane which is generated by electron transport complexes of the respiratory chain. ATP synthase complex consist of a soluble F(1) head domain - the catalytic core - and a membrane F(1) domain - the membrane proton channel. These two domains are linked by a central stalk rotating inside the F(1) region and a stationary peripheral stalk. During catalysis, ATP synthesis in the catalytic domain of F(1) is coupled via a rotary mechanism of the central stalk subunits to proton translocation. In vivo, can only synthesize ATP although its ATP hydrolase activity can be activated artificially in vitro. Part of the complex F(0) domain. The sequence is that of ATP synthase F(0) complex subunit f, mitochondrial from Rattus norvegicus (Rat).